Here is a 191-residue protein sequence, read N- to C-terminus: Leucyl/phenylalanyl-tRNA--protein transferase (191 aa).

It belongs to the L/F-transferase family.

The protein resides in the cytoplasm. The catalysed reaction is N-terminal L-lysyl-[protein] + L-leucyl-tRNA(Leu) = N-terminal L-leucyl-L-lysyl-[protein] + tRNA(Leu) + H(+). It catalyses the reaction N-terminal L-arginyl-[protein] + L-leucyl-tRNA(Leu) = N-terminal L-leucyl-L-arginyl-[protein] + tRNA(Leu) + H(+). It carries out the reaction L-phenylalanyl-tRNA(Phe) + an N-terminal L-alpha-aminoacyl-[protein] = an N-terminal L-phenylalanyl-L-alpha-aminoacyl-[protein] + tRNA(Phe). Functions in the N-end rule pathway of protein degradation where it conjugates Leu, Phe and, less efficiently, Met from aminoacyl-tRNAs to the N-termini of proteins containing an N-terminal arginine or lysine. The protein is Leucyl/phenylalanyl-tRNA--protein transferase of Nostoc punctiforme (strain ATCC 29133 / PCC 73102).